A 441-amino-acid polypeptide reads, in one-letter code: 3-phosphoshikimate 1-carboxyvinyltransferase (441 aa).

Residues Lys26, Ser27, and Arg31 each coordinate 3-phosphoshikimate. Phosphoenolpyruvate is bound at residue Lys26. Gly99 and Arg127 together coordinate phosphoenolpyruvate. Residues Ser173, Ser174, Gln175, Ser203, Asp320, and Lys347 each coordinate 3-phosphoshikimate. Gln175 provides a ligand contact to phosphoenolpyruvate. Asp320 serves as the catalytic Proton acceptor. Residues Arg351, Arg393, and Lys423 each coordinate phosphoenolpyruvate.

The protein belongs to the EPSP synthase family. As to quaternary structure, monomer.

It localises to the cytoplasm. It catalyses the reaction 3-phosphoshikimate + phosphoenolpyruvate = 5-O-(1-carboxyvinyl)-3-phosphoshikimate + phosphate. The protein operates within metabolic intermediate biosynthesis; chorismate biosynthesis; chorismate from D-erythrose 4-phosphate and phosphoenolpyruvate: step 6/7. Its function is as follows. Catalyzes the transfer of the enolpyruvyl moiety of phosphoenolpyruvate (PEP) to the 5-hydroxyl of shikimate-3-phosphate (S3P) to produce enolpyruvyl shikimate-3-phosphate and inorganic phosphate. In Janthinobacterium sp. (strain Marseille) (Minibacterium massiliensis), this protein is 3-phosphoshikimate 1-carboxyvinyltransferase.